A 230-amino-acid chain; its full sequence is 2,3-bisphosphoglycerate-dependent phosphoglycerate mutase (230 aa).

Substrate-binding positions include 8 to 15 (RHGESEWN), 21 to 22 (TG), Arg60, 87 to 90 (ERHY), Lys98, 114 to 115 (RR), and 183 to 184 (GN). Catalysis depends on His9, which acts as the Tele-phosphohistidine intermediate. The active-site Proton donor/acceptor is Glu87.

This sequence belongs to the phosphoglycerate mutase family. BPG-dependent PGAM subfamily.

It catalyses the reaction (2R)-2-phosphoglycerate = (2R)-3-phosphoglycerate. Its pathway is carbohydrate degradation; glycolysis; pyruvate from D-glyceraldehyde 3-phosphate: step 3/5. In terms of biological role, catalyzes the interconversion of 2-phosphoglycerate and 3-phosphoglycerate. This chain is 2,3-bisphosphoglycerate-dependent phosphoglycerate mutase, found in Streptococcus pneumoniae (strain ATCC BAA-255 / R6).